A 341-amino-acid chain; its full sequence is Anthranilate phosphoribosyltransferase (341 aa).

Residues Gly80, 83 to 84 (GD), Thr88, 90 to 93 (NIST), 108 to 116 (KHGNRSVSS), and Ser120 each bind 5-phospho-alpha-D-ribose 1-diphosphate. Gly80 is a binding site for anthranilate. A Mg(2+)-binding site is contributed by Ser92. An anthranilate-binding site is contributed by Asn111. Anthranilate is bound at residue Arg166. Asp225 and Glu226 together coordinate Mg(2+).

This sequence belongs to the anthranilate phosphoribosyltransferase family. Homodimer. Requires Mg(2+) as cofactor.

It carries out the reaction N-(5-phospho-beta-D-ribosyl)anthranilate + diphosphate = 5-phospho-alpha-D-ribose 1-diphosphate + anthranilate. It functions in the pathway amino-acid biosynthesis; L-tryptophan biosynthesis; L-tryptophan from chorismate: step 2/5. Catalyzes the transfer of the phosphoribosyl group of 5-phosphorylribose-1-pyrophosphate (PRPP) to anthranilate to yield N-(5'-phosphoribosyl)-anthranilate (PRA). The chain is Anthranilate phosphoribosyltransferase from Shouchella clausii (strain KSM-K16) (Alkalihalobacillus clausii).